A 440-amino-acid chain; its full sequence is Transposon Ty1-NL1 Gag polyprotein (440 aa).

Polar residues-rich tracts occupy residues methionine 1–serine 23, threonine 48–serine 60, serine 71–glutamine 86, and proline 131–phenylalanine 152. 3 disordered regions span residues methionine 1–glutamine 86, proline 131–proline 171, and glutamine 350–isoleucine 425. Over residues threonine 153–threonine 165 the composition is skewed to low complexity. Residues asparagine 299–histidine 401 form an RNA-binding region. The segment covering asparagine 363–arginine 372 has biased composition (basic and acidic residues). The span at threonine 373–proline 412 shows a compositional bias: polar residues.

Homotrimer.

The protein localises to the cytoplasm. Its function is as follows. Capsid protein (CA) is the structural component of the virus-like particle (VLP), forming the shell that encapsulates the retrotransposons dimeric RNA genome. The particles are assembled from trimer-clustered units and there are holes in the capsid shells that allow for the diffusion of macromolecules. CA also has nucleocapsid-like chaperone activity, promoting primer tRNA(i)-Met annealing to the multipartite primer-binding site (PBS), dimerization of Ty1 RNA and initiation of reverse transcription. In Saccharomyces cerevisiae (strain ATCC 204508 / S288c) (Baker's yeast), this protein is Transposon Ty1-NL1 Gag polyprotein (TY1A-NL1).